A 137-amino-acid chain; its full sequence is Phospholipase A2 group V (137 aa).

The first 20 residues, 1–20, serve as a signal peptide directing secretion; that stretch reads MKGLLTLAWFLACSVPAVPG. Intrachain disulfides connect cysteine 46–cysteine 137, cysteine 48–cysteine 64, cysteine 63–cysteine 117, cysteine 70–cysteine 110, cysteine 79–cysteine 103, and cysteine 97–cysteine 108. Residues tyrosine 47, glycine 49, and glycine 51 each coordinate Ca(2+). Histidine 67 is a catalytic residue. Aspartate 68 provides a ligand contact to Ca(2+). Aspartate 111 is a catalytic residue.

This sequence belongs to the phospholipase A2 family. The cofactor is Ca(2+). Post-translationally, this enzyme lacks one of the seven disulfide bonds found in similar PA2 proteins. As to expression, expressed in peritoneal macrophages (at protein level). Expressed in heart, skeletal muscle and white adipose tissue.

It is found in the secreted. It localises to the cell membrane. The protein localises to the cytoplasmic vesicle. The protein resides in the phagosome. Its subcellular location is the recycling endosome. It is found in the golgi apparatus. It localises to the cis-Golgi network. The protein localises to the trans-Golgi network. It catalyses the reaction a 1,2-diacyl-sn-glycero-3-phosphocholine + H2O = a 1-acyl-sn-glycero-3-phosphocholine + a fatty acid + H(+). The enzyme catalyses 1-hexadecanoyl-2-(9Z-octadecenoyl)-sn-glycero-3-phosphocholine + H2O = 1-hexadecanoyl-sn-glycero-3-phosphocholine + (9Z)-octadecenoate + H(+). The catalysed reaction is 1-hexadecanoyl-2-(5Z,8Z,11Z,14Z-eicosatetraenoyl)-sn-glycero-3-phosphocholine + H2O = 1-hexadecanoyl-sn-glycero-3-phosphocholine + (5Z,8Z,11Z,14Z)-eicosatetraenoate + H(+). It carries out the reaction 1-hexadecanoyl-2-(9Z,12Z-octadecadienoyl)-sn-glycero-3-phosphoethanolamine + H2O = 1-hexadecanoyl-sn-glycero-3-phosphoethanolamine + (9Z,12Z)-octadecadienoate + H(+). It catalyses the reaction 1-hexadecanoyl-2-(5Z,8Z,11Z,14Z-eicosatetraenoyl)-sn-glycero-3-phosphoethanolamine + H2O = 1-hexadecanoyl-sn-glycero-3-phosphoethanolamine + (5Z,8Z,11Z,14Z)-eicosatetraenoate + H(+). The enzyme catalyses 1-octadecanoyl-2-(5Z,8Z,11Z,14Z-eicosatetraenoyl)-sn-glycero-3-phospho-(1D-myo-inositol) + H2O = 1-octadecanoyl-sn-glycero-3-phospho-(1D-myo-inositol) + (5Z,8Z,11Z,14Z)-eicosatetraenoate + H(+). The catalysed reaction is 1-hexadecanoyl-2-(9Z-octadecenoyl)-sn-glycero-3-phosphoglycerol + H2O = 1-hexadecanoyl-sn-glycero-3-phosphoglycerol + (9Z)-octadecenoate + H(+). It carries out the reaction N-hexadecanoyl-1,2-di-(9Z-octadecenoyl)-sn-glycero-3-phosphoethanolamine + H2O = N-hexadecanoyl-1-(9Z-octadecenoyl)-sn-glycero-3-phosphoethanolamine + (9Z)-octadecenoate + H(+). It catalyses the reaction 1'-[1,2-di-(9Z-octadecenoyl)-sn-glycero-3-phospho]-3'-[1-(9Z-octadecenoyl)-sn-glycero-3-phospho]-glycerol + H2O = 1',3'-bis-[1-(9Z-octadecenoyl)-sn-glycero-3-phospho]-glycerol + (9Z)-octadecenoate + H(+). The enzyme catalyses 1',3'-bis[1,2-di-(9Z-octadecenoyl)-sn-glycero-3-phospho]-glycerol + H2O = 1'-[1,2-di-(9Z-octadecenoyl)-sn-glycero-3-phospho]-3'-[1-(9Z-octadecenoyl)-sn-glycero-3-phospho]-glycerol + (9Z)-octadecenoate + H(+). The protein operates within lipid metabolism; phospholipid metabolism. It functions in the pathway lipid metabolism; leukotriene B4 biosynthesis. It participates in lipid metabolism; leukotriene C4 biosynthesis. Its function is as follows. Secretory calcium-dependent phospholipase A2 that primarily targets extracellular phospholipids. Hydrolyzes the ester bond of the fatty acyl group attached at sn-2 position of phospholipids (phospholipase A2 activity), preferentially releasing fatty acyl groups with a low degree of unsaturation such as oleoyl (C18:1) and linoleoyl (C18:2) groups. Hydrolyzes low-density lipoprotein (LDL) phospholipids releasing unsaturated fatty acids that drive macrophage polarization toward an M2 phenotype. May act in an autocrine and paracrine manner. Contributes to lipid remodeling of cellular membranes at different subcellular locations and generation of lipid mediators involved in pathogen clearance. Cleaves sn-2 fatty acyl chains of cardiolipin, a major component of the inner membrane of mitochondria and bacterial membranes. Promotes phagocytosis of bacteria in macrophages through production of lysophosphatidylethanolamines. Displays bactericidal activity against Gram-positive bacteria by directly hydrolyzing the phospholipids of the bacterial membrane. Promotes phagocytosis and killing of ingested fungi likely through controlling phagosome-lysosome fusion and phagosome maturation. Plays a role in biosynthesis of cysteinyl leukotrienes (CysLTs) in myeloid cells. In eosinophils, triggers perinuclear arachidonate release and LTC4 synthesis in a PLA2G4A-independent way. In neutrophils, amplifies CysLTs biosynthesis initiated by PLA2G4A. Promotes immune complex clearance in macrophages via stimulating synthesis of CysLTs, which act through CYSLTR1 to trigger phagocytosis. May regulate antigen processing in antigen-presenting cells. In pulmonary macrophages regulates IL33 production required for activation of group 2 innate lymphoid cells. May play a role in the biosynthesis of N-acyl ethanolamines that regulate energy metabolism. Hydrolyzes N-acyl phosphatidylethanolamines to N-acyl lysophosphatidylethanolamines, which are further cleaved by a lysophospholipase D to release N-acyl ethanolamines. The sequence is that of Phospholipase A2 group V (Pla2g5) from Mus musculus (Mouse).